The primary structure comprises 564 residues: Urocanate hydratase (564 aa).

NAD(+) is bound by residues 58–59 (GG), glutamine 136, 182–184 (GMG), glutamate 202, arginine 207, 245–246 (NA), 266–270 (QTSAH), 276–277 (YL), and tyrosine 325. Residue cysteine 413 is part of the active site. Glycine 495 serves as a coordination point for NAD(+).

This sequence belongs to the urocanase family. Requires NAD(+) as cofactor.

Its subcellular location is the cytoplasm. The catalysed reaction is 4-imidazolone-5-propanoate = trans-urocanate + H2O. It participates in amino-acid degradation; L-histidine degradation into L-glutamate; N-formimidoyl-L-glutamate from L-histidine: step 2/3. Functionally, catalyzes the conversion of urocanate to 4-imidazolone-5-propionate. This Vibrio atlanticus (strain LGP32) (Vibrio splendidus (strain Mel32)) protein is Urocanate hydratase.